A 361-amino-acid chain; its full sequence is Outer membrane protein P2 (361 aa).

An N-terminal signal peptide occupies residues 1–20 (MKKTLAALIVGAFAASAANA).

This sequence belongs to the Gram-negative porin family. As to quaternary structure, homotrimer.

It localises to the cell outer membrane. Forms pores that allow passive diffusion of small molecules across the outer membrane. In Haemophilus influenzae, this protein is Outer membrane protein P2 (ompP2).